Reading from the N-terminus, the 403-residue chain is Phosphopentomutase (403 aa).

6 residues coordinate Mn(2+): Asp13, Asp298, His303, Asp339, His340, and His351.

The protein belongs to the phosphopentomutase family. It depends on Mn(2+) as a cofactor.

It is found in the cytoplasm. The enzyme catalyses 2-deoxy-alpha-D-ribose 1-phosphate = 2-deoxy-D-ribose 5-phosphate. It catalyses the reaction alpha-D-ribose 1-phosphate = D-ribose 5-phosphate. It functions in the pathway carbohydrate degradation; 2-deoxy-D-ribose 1-phosphate degradation; D-glyceraldehyde 3-phosphate and acetaldehyde from 2-deoxy-alpha-D-ribose 1-phosphate: step 1/2. Its function is as follows. Isomerase that catalyzes the conversion of deoxy-ribose 1-phosphate (dRib-1-P) and ribose 1-phosphate (Rib-1-P) to deoxy-ribose 5-phosphate (dRib-5-P) and ribose 5-phosphate (Rib-5-P), respectively. In Streptococcus uberis (strain ATCC BAA-854 / 0140J), this protein is Phosphopentomutase.